Consider the following 1055-residue polypeptide: Pre-mRNA-splicing factor ATP-dependent RNA helicase-like protein cdc28 (1055 aa).

Residues 67-78 (PREGSRPKENYN) are compositionally biased toward basic and acidic residues. Positions 67–184 (PREGSRPKEN…TERLNDLRER (118 aa)) are disordered. Positions 112 to 121 (PLKKKSRSKT) are enriched in basic residues. Basic and acidic residues predominate over residues 122 to 132 (PKREIARRQRD). Over residues 133-145 (EDEWESDEYEEVV) the composition is skewed to acidic residues. A compositionally biased stretch (basic and acidic residues) spans 163–184 (QNHDYEKSSDPETERLNDLRER). One can recognise a Helicase ATP-binding domain in the interval 428-592 (LKAINEYQVL…FDEAPVFYVP (165 aa)). 441 to 448 (AETGSGKT) is an ATP binding site. Residues 539–542 (DEAH) carry the DEAH box motif. Residues 617 to 790 (TILQIHTTQP…NIVLLLKSLG (174 aa)) form the Helicase C-terminal domain.

Belongs to the DEAD box helicase family. DEAH subfamily. DDX16/PRP8 sub-subfamily.

The protein resides in the nucleus. The enzyme catalyses ATP + H2O = ADP + phosphate + H(+). Functionally, involved in pre-mRNA splicing. Is required together with ATP and at least one other factor, for the first cleavage-ligation reaction. Functions as a molecular motor in the activation of the precatalytic spliceosome for the first transesterification reaction of pre-mRNA splicing by hydrolyzing ATP to cause the activation of the spliceosome without the occurrence of splicing. This Schizosaccharomyces pombe (strain 972 / ATCC 24843) (Fission yeast) protein is Pre-mRNA-splicing factor ATP-dependent RNA helicase-like protein cdc28 (cdc28).